Reading from the N-terminus, the 179-residue chain is Proteasome chaperone 3 (179 aa).

The protein belongs to the PSMG3 family. Component of the 20S proteasome chaperone. Forms a heterodimer with POC4 that binds to proteasome precursors. Interacts with POP2.

In terms of biological role, involved in 20S proteasome assembly, facilitating the alpha-ring formation. This Saccharomyces cerevisiae (strain ATCC 204508 / S288c) (Baker's yeast) protein is Proteasome chaperone 3 (IRC25).